The sequence spans 81 residues: Conotoxin Lt6.4 (81 aa).

Positions 1-19 (MKLVLAIVLILMFLSLSAG) are cleaved as a signal peptide. The propeptide occupies 20 to 42 (AETSDNGVSRGGHRPQYWPVTPP). 3 disulfides stabilise this stretch: Cys-46/Cys-60, Cys-53/Cys-65, and Cys-59/Cys-80.

The protein belongs to the conotoxin I3 superfamily. Expressed by the venom duct.

It is found in the secreted. This chain is Conotoxin Lt6.4, found in Conus litteratus (Lettered cone).